The sequence spans 229 residues: uncharacterized protein (229 aa).

22-29 (GMIAFGKT) contacts ATP.

This is an uncharacterized protein from Mycoplasma pneumoniae (strain ATCC 29342 / M129 / Subtype 1) (Mycoplasmoides pneumoniae).